A 1493-amino-acid chain; its full sequence is Protein RNA-directed DNA methylation 3 (1493 aa).

Disordered stretches follow at residues 1–34 (MDRK…EGLR) and 54–96 (GYYG…SSFV). The Nuclear localization signal motif lies at 21 to 28 (KRKNSVEF). Over residues 24–34 (NSVEFRDEGLR) the composition is skewed to basic and acidic residues. Over residues 60–80 (SDEDDDGLGFLNDMEDEPEVE) the composition is skewed to acidic residues. Positions 81-92 (ESSKAGKGEKGK) are enriched in basic and acidic residues. Residues 239–266 (KVSEGTWARVKNGKYKGDLAQIVAVSDT) enclose the KOW 1 domain. Residues 393–432 (PTCREGGKGEGSGGGKGEGSGGGKGEGSRGGKGEGSSDFK) are disordered. Over residues 401–417 (GEGSGGGKGEGSGGGKG) the composition is skewed to gly residues. Positions 418–432 (EGSRGGKGEGSSDFK) are enriched in basic and acidic residues. In terms of domain architecture, KOW 2 spans 501–528 (QISVNDVVKISKGPSEGKQGVVRQVYRG). Residues 578–602 (SSPKSPLSPEKEWQPRERYNSSNQG) are disordered. Positions 586 to 596 (PEKEWQPRERY) are enriched in basic and acidic residues. The region spanning 607-634 (TYSIGQKLRIRVGPLKGYLCRVIALRYS) is the KOW 3 domain. Disordered stretches follow at residues 692 to 711 (IGAG…PSTD), 728 to 747 (EKNP…TVAD), and 757 to 1493 (AAEN…KTGW). The stretch at 732–741 (WGGSKPTSDV) is repeat 1. The segment at 732 to 1493 (WGGSKPTSDV…WGTGDKKTGW (762 aa)) is 42 X 9 AA approximate WG/GW-rich tandem repeats. Residues 757–767 (AAENKPASASD) are compositionally biased toward low complexity. Tandem repeats lie at residues 775–784 (WGKTPASEAG), 789–797 (WGDTSASNV), 818–827 (WGTHGGSSGG), 836–845 (WGKLCEASES), 854–863 (WGKKGGSDGE), 866–875 (WGNKDGNSSA), 883–892 (WGQQDKGSDE), 917–926 (GWNKSAEDSN), 935–943 (WGQPNDGSS), 944–953 (WGKKGDGAAS), 954–962 (WGKKDDGGS), 963–972 (WGKKDDGNKD), 978–987 (WGKKDDGQKD), 1003–1012 (WGKKDDGGSS), 1013–1022 (WGKKDDGGSL), 1023–1032 (WGKKDDGGSS), 1033–1042 (WGKEDDGGSL), 1043–1052 (WGKKDDGESS), 1053–1062 (WGKKDDGESS), 1063–1072 (WGKKDDGGSS), 1073–1082 (WGKKDEGGYS), 1132–1141 (WGKQDGDGGG), 1144–1153 (WGKENDAGGG), 1156–1165 (WGKQDNGVGS), 1167–1176 (WGKQNDGSGG), 1180–1189 (WGKQNDAGGG), 1192–1201 (WGKQDSGGDG), 1204–1213 (WGKQDGGGDS), 1217–1226 (WGKQNNTSGG), 1229–1238 (WGKQSDAGGG), 1241–1250 (WGKQDGGGGG), 1253–1262 (WGKQDGGGGS), 1266–1275 (WGKQNETSNG), 1278–1287 (WGKQNDSGGG), 1290–1299 (WGKQDGGGGG), 1302–1311 (WGKQNDGGGG), and 1314–1323 (WGKQGDGGSK). The span at 790–812 (GDTSASNVEASSWEKQGASTSNV) shows a compositional bias: polar residues. The segment covering 846 to 860 (SQKKEESSWGKKGGS) has biased composition (basic and acidic residues). Over residues 866 to 875 (WGNKDGNSSA) the composition is skewed to polar residues. A compositionally biased stretch (basic and acidic residues) spans 955-1090 (GKKDDGGSWG…YSEQTFDRGG (136 aa)). Residues 1122–1134 (PWSKPSGGSSWGK) show a composition bias toward low complexity. Polar residues predominate over residues 1156–1172 (WGKQDNGVGSSWGKQND). Gly residues predominate over residues 1186 to 1213 (AGGGSSWGKQDSGGDGSSWGKQDGGGDS). Residues 1218 to 1231 (GKQNNTSGGSSWGK) are compositionally biased toward polar residues. The span at 1235-1264 (AGGGSSWGKQDGGGGGSSWGKQDGGGGSGS) shows a compositional bias: gly residues. Positions 1270 to 1283 (NETSNGSSWGKQND) are enriched in polar residues. Over residues 1284-1321 (SGGGSSWGKQDGGGGGSSWGKQNDGGGGSSWGKQGDGG) the composition is skewed to gly residues. Composition is skewed to polar residues over residues 1366–1382 (WKTD…QSGG) and 1392–1401 (DSNNSKPSGS). Residues 1389–1398 (WGEDSNNSKP) form repeat 39. The segment covering 1416 to 1430 (NSKKETNDKPGDDSK) has biased composition (basic and acidic residues). A compositionally biased stretch (polar residues) spans 1432–1442 (AWGTSNDQVNT). 3 tandem repeats follow at residues 1433-1442 (WGTSNDQVNT), 1467-1475 (WGGKTNAVA), and 1484-1493 (WGTGDKKTGW).

Interacts with AGO4 via its C-terminal region and with RNA transcripts. Binds chromatin at loci subject to transcriptional silencing downstream of RNA Polymerase V, but independently from the presence of 24-nt siRNA.

The protein resides in the nucleus. The protein localises to the nucleoplasm. Effector of RNA-directed DNA methylation (RdDM) triggered by small interfering RNAs (siRNAs, 24-nt RNAs). Functions as an adapter protein that binds scaffold transcripts generated by polymerase V and recruits AGO4 and AGO4-bound siRNAs to form an RdDM effector complex. Promotes the expression of 24-nt RNAs. Required for the initial establishment of DNA methylation. Together with AGO4, required for transcriptional gene silencing (TGS) by DNA methylation and repressive histone modifications (H3K9me2) of several chromatin loci. This Arabidopsis thaliana (Mouse-ear cress) protein is Protein RNA-directed DNA methylation 3.